We begin with the raw amino-acid sequence, 71 residues long: UPF0437 protein asl1434 (71 aa).

It belongs to the UPF0437 family.

The chain is UPF0437 protein asl1434 from Nostoc sp. (strain PCC 7120 / SAG 25.82 / UTEX 2576).